Consider the following 587-residue polypeptide: Beta-(1--&gt;2)glucan export ATP-binding/permease protein NdvA (587 aa).

The ABC transmembrane type-1 domain occupies 21-301 (VSLVVVANIV…MRQFATQIFE (281 aa)). Helical transmembrane passes span 23–43 (LVVV…ILFG), 57–77 (PILF…VLVA), 128–148 (GLWL…ALLI), 158–178 (LSAV…VVMS), 248–268 (MAST…VQAG), and 272–292 (VGDV…LDLM). An ABC transporter domain is found at 335–569 (IEFRDVSFGF…NGRFAALLRA (235 aa)). 368-375 (GPTGAGKT) contacts ATP.

This sequence belongs to the ABC transporter superfamily. Beta-(1--&gt;2)glucan exporter (TC 3.A.1.108.1) family. As to quaternary structure, homodimer.

It localises to the cell inner membrane. The catalysed reaction is [(1-&gt;2)-beta-D-glucosyl](n)(in) + ATP + H2O = [(1-&gt;2)-beta-D-glucosyl](n)(out) + ADP + phosphate + H(+). Functionally, involved in beta-(1--&gt;2)glucan export. Transmembrane domains (TMD) form a pore in the inner membrane and the ATP-binding domain (NBD) is responsible for energy generation. The chain is Beta-(1--&gt;2)glucan export ATP-binding/permease protein NdvA from Rhizobium johnstonii (strain DSM 114642 / LMG 32736 / 3841) (Rhizobium leguminosarum bv. viciae).